The following is a 191-amino-acid chain: Large ribosomal subunit protein uL22 (191 aa).

A compositionally biased stretch (basic and acidic residues) spans 159–168 (VPKGEDDTAQ). Positions 159-191 (VPKGEDDTAQKKKVSQKKLKKQKLKAALSGGAD) are disordered. Over residues 169–182 (KKKVSQKKLKKQKL) the composition is skewed to basic residues.

Belongs to the universal ribosomal protein uL22 family.

This is Large ribosomal subunit protein uL22 (RPL17) from Suberites domuncula (Sponge).